The sequence spans 188 residues: Probable nicotinate-nucleotide adenylyltransferase (188 aa).

The protein belongs to the NadD family.

The enzyme catalyses nicotinate beta-D-ribonucleotide + ATP + H(+) = deamido-NAD(+) + diphosphate. It participates in cofactor biosynthesis; NAD(+) biosynthesis; deamido-NAD(+) from nicotinate D-ribonucleotide: step 1/1. Its function is as follows. Catalyzes the reversible adenylation of nicotinate mononucleotide (NaMN) to nicotinic acid adenine dinucleotide (NaAD). This Salinispora arenicola (strain CNS-205) protein is Probable nicotinate-nucleotide adenylyltransferase.